The following is a 164-amino-acid chain: Phosphopantetheine adenylyltransferase (164 aa).

Serine 9 serves as a coordination point for substrate. ATP is bound by residues 9 to 10 (SF) and histidine 17. Substrate contacts are provided by lysine 41, leucine 73, and lysine 87. Residues 88 to 90 (GLR), glutamate 98, and 122 to 128 (YSYLSSS) each bind ATP.

Belongs to the bacterial CoaD family. In terms of assembly, homohexamer. Mg(2+) serves as cofactor.

The protein resides in the cytoplasm. The catalysed reaction is (R)-4'-phosphopantetheine + ATP + H(+) = 3'-dephospho-CoA + diphosphate. Its pathway is cofactor biosynthesis; coenzyme A biosynthesis; CoA from (R)-pantothenate: step 4/5. Reversibly transfers an adenylyl group from ATP to 4'-phosphopantetheine, yielding dephospho-CoA (dPCoA) and pyrophosphate. This Rhodococcus erythropolis (strain PR4 / NBRC 100887) protein is Phosphopantetheine adenylyltransferase.